Reading from the N-terminus, the 239-residue chain is Protein UL24 homolog (239 aa).

The interval 212-239 (TPKLGNSKTSKRKRRNSKKQDFKKLVKN) is disordered. Positions 229–239 (KKQDFKKLVKN) are enriched in basic and acidic residues.

The protein belongs to the herpesviridae UL24 family.

It is found in the virion. The protein resides in the host cytoplasm. Its subcellular location is the host nucleus. The protein localises to the host nucleolus. It localises to the host Golgi apparatus. In terms of biological role, may participate in nuclear egress of viral particles. Plays a role in the dispersal of several host nucleolar proteins including NCL/nucleolin and NPM1. Since deletion of host NCL/nucleolin negatively impact on nuclear egress, UL24 supposedly acts on this process through its effect on host nucleoli. This Homo sapiens (Human) protein is Protein UL24 homolog (U49).